We begin with the raw amino-acid sequence, 84 residues long: Small ribosomal subunit protein uS17 (84 aa).

The protein belongs to the universal ribosomal protein uS17 family. In terms of assembly, part of the 30S ribosomal subunit.

In terms of biological role, one of the primary rRNA binding proteins, it binds specifically to the 5'-end of 16S ribosomal RNA. The chain is Small ribosomal subunit protein uS17 from Histophilus somni (strain 129Pt) (Haemophilus somnus).